The chain runs to 282 residues: Pantothenate synthetase (282 aa).

30–37 provides a ligand contact to ATP; it reads MGALHAGH. H37 (proton donor) is an active-site residue. Q61 serves as a coordination point for (R)-pantoate. Residue Q61 coordinates beta-alanine. 147-150 is an ATP binding site; sequence GEKD. A (R)-pantoate-binding site is contributed by Q153. Residues V176 and 184 to 187 each bind ATP; that span reads LSSR.

It belongs to the pantothenate synthetase family. As to quaternary structure, homodimer.

Its subcellular location is the cytoplasm. It catalyses the reaction (R)-pantoate + beta-alanine + ATP = (R)-pantothenate + AMP + diphosphate + H(+). It functions in the pathway cofactor biosynthesis; (R)-pantothenate biosynthesis; (R)-pantothenate from (R)-pantoate and beta-alanine: step 1/1. Its function is as follows. Catalyzes the condensation of pantoate with beta-alanine in an ATP-dependent reaction via a pantoyl-adenylate intermediate. This Bacteroides fragilis (strain YCH46) protein is Pantothenate synthetase.